A 327-amino-acid polypeptide reads, in one-letter code: Aldo/keto reductase slr0942 (327 aa).

Gly18–Gly27 provides a ligand contact to NADP(+). Catalysis depends on Tyr57, which acts as the Proton donor. His119 contributes to the substrate binding site. Ser216–Asn280 lines the NADP(+) pocket.

The protein belongs to the aldo/keto reductase family. Monomer.

It carries out the reaction a secondary alcohol + NADP(+) = a ketone + NADPH + H(+). Its activity is regulated as follows. Curcumin non-competitively inhibits the enzyme with respect to furfural. To a lesser extent, enzyme activity is also inhibited by indomethacin, coumarate, coumarin, and alrestatin. Its function is as follows. Aldo/keto reductase with broad substrate spectrum. Catalyzes the NADPH-dependent reduction of aldehyde- and ketone-groups of different classes of carbonyl compounds to the corresponding alcohols. Highest enzymatic efficiency is observed with 4-oxonon-2-enal (4-ONE) and 4-hydroxynon-2-enal (4-HNE), that are lipid peroxidation products, and 9,10-phenanthrenequinone (9,10-PQ), a photoproduct of phenanthrene that is one of the most prevalent polycyclic aromatic hydrocarbons in the environment. Is also active on sugar-derived reactive carbonyls such as methylglyoxal (MG), glyoxal and 3-deoxyglucosone (3-DG), and on other lipid-derived carbonyls such as acrolein. May be involved in the detoxification of the toxic lipid peroxidation products 4-ONE and 4-HNE besides many other exo- and endogenic reactive carbonyl compounds (RCs) that may lead to photoinhibition or other cell damages. The chain is Aldo/keto reductase slr0942 from Synechocystis sp. (strain ATCC 27184 / PCC 6803 / Kazusa).